We begin with the raw amino-acid sequence, 410 residues long: Putative odorant receptor 65c (410 aa).

Over 1–59 the chain is Cytoplasmic; sequence MDIRGNVHRFVKFYIDGWKHFRDPTMESSYSAVYYWREQMKAMFLYTTSKERQMPYRSS. The chain crosses the membrane as a helical span at residues 60–80; that stretch reads WHTLVIIQATVCFLTMCYGVT. At 81-92 the chain is on the extracellular side; sequence ESLGDKVQMGRD. The chain crosses the membrane as a helical span at residues 93-113; the sequence is IAFIIGFFYIAFKIYYFQWYG. Residues 114–148 are Cytoplasmic-facing; the sequence is DELDEVVEALETFHPWAQKGPGAVDYRTAKRWYFT. A helical membrane pass occupies residues 149–169; it reads LAFFLASSWLVFLCIFILLLI. Over 170 to 222 the chain is Extracellular; sequence TSPLWVHQQILPLHAAFPFQWHEKSIHPISHAFIYLFQTWNVMYFLTWLVCIE. Residues 223–243 traverse the membrane as a helical segment; sequence GLSVSIYVEITFAIEVLCLEL. Topologically, residues 244–279 are cytoplasmic; the sequence is RHLHQRCHGYEQLRLETNRLVQFHQKIVHILDHTNK. The helical transmembrane segment at 280-300 threads the bilayer; that stretch reads VFHGTLIMQMGVNFFLVSLSV. At 301–312 the chain is on the extracellular side; sequence LEAMEARKDPKV. Residues 313-333 traverse the membrane as a helical segment; it reads VAQFAVLMLLALGHLSMWSYF. Residues 334-385 are Cytoplasmic-facing; the sequence is GDLLSQKSLTISEAAYEAYDPIKGSKDVYRDLCLIIRRGQEPLIMRASPFPS. Residues 386 to 406 traverse the membrane as a helical segment; it reads FNFINYSAILNQCYGILTFLL. The Extracellular portion of the chain corresponds to 407–410; that stretch reads KTLD.

This sequence belongs to the insect chemoreceptor superfamily. Heteromeric odorant receptor channel (TC 1.A.69) family. Or49a subfamily. In terms of assembly, interacts with Orco. Complexes exist early in the endomembrane system in olfactory sensory neurons (OSNs), coupling these complexes to the conserved ciliary trafficking pathway.

It is found in the cell membrane. Its function is as follows. Odorant receptor which mediates acceptance or avoidance behavior, depending on its substrates. The odorant receptor repertoire encodes a large collection of odor stimuli that vary widely in identity, intensity, and duration. May form a complex with Orco to form odorant-sensing units, providing sensitive and prolonged odorant signaling and calcium permeability. This is Putative odorant receptor 65c (Or65c) from Drosophila melanogaster (Fruit fly).